The sequence spans 75 residues: UPF0352 protein YejL (75 aa).

The protein belongs to the UPF0352 family.

The sequence is that of UPF0352 protein YejL from Escherichia coli O139:H28 (strain E24377A / ETEC).